We begin with the raw amino-acid sequence, 697 residues long: UBA domain-containing protein 7 (697 aa).

Positions 1 to 94 (MDDLLDFNFY…STPKSSNYDP (94 aa)) are disordered. Residues 13–32 (STPSNQNNYSNNNSRTPSYS) are compositionally biased toward low complexity. Residues 62 to 77 (KKTDNKISLKELERQK) show a composition bias toward basic and acidic residues. Polar residues predominate over residues 81–92 (PDSNSTPKSSNY). Residues 181–221 (KLSSNEMYEKLRDLGFSDDQSRLALENSGSLEDAIEYILEK) enclose the UBA domain. The segment at 306-346 (PEILPKTPIPKRKPHKVPMNEKVSEDRITTNQSRSGNDESS) is disordered. The segment covering 323–333 (PMNEKVSEDRI) has biased composition (basic and acidic residues). Over residues 334 to 345 (TTNQSRSGNDES) the composition is skewed to polar residues. The stretch at 412 to 445 (VEEQQSTGNELFRKGDFSQAIEEFTNSLSQLPAK) is one TPR repeat. The segment at 547–573 (ISSHSSESHSKRTTQQPKSTPNHTNIK) is disordered. Residues 559 to 573 (TTQQPKSTPNHTNIK) show a composition bias toward polar residues. Residues 633–696 (CRWQKVSLSE…AWELFKQQND (64 aa)) form the J domain.

The protein is UBA domain-containing protein 7 (ucp7) of Schizosaccharomyces pombe (strain 972 / ATCC 24843) (Fission yeast).